Reading from the N-terminus, the 3744-residue chain is SAGA complex/NuA4 acetyltransferase complex subunit TRA1 (3744 aa).

Ser2 bears the N-acetylserine mark. 4 HEAT repeats span residues 2–40 (SLTEQIEQFASRFRDDDATLQSRYSTLSELYDIMELLNS), 46–92 (FFLQ…NQTF), 94–131 (PYAMEVLEFLLSVLPKENEENGILCMKVLTTLFKSFKS), and 135–172 (DKLDSFIRIIIQIYKNTPNLINQTFYEAGKAEQGDLDS). An HEAT region spans residues 2 to 2598 (SLTEQIEQFA…KPYHTRQISS (2597 aa)). Ser172 carries the phosphoserine modification. The span at 185–195 (FSKNDEEKDFP) shows a compositional bias: basic and acidic residues. A disordered region spans residues 185 to 212 (FSKNDEEKDFPSKQSSTEPRFENSTSSN). Positions 196–212 (SKQSSTEPRFENSTSSN) are enriched in polar residues. HEAT repeat units lie at residues 247–284 (PEFTPLIMNLLNIQIKQQQEAREQAESRGEHFTSISTE), 319–357 (QDYVNFVPDLIIRLLQDCPSELSSARKELLHATRHILST), and 437–477 (KLLL…RFKT). Residues 522–539 (LEPSDDDHLMPQPKKEDI) show a composition bias toward basic and acidic residues. The segment at 522–546 (LEPSDDDHLMPQPKKEDINDSPDVE) is disordered. At Ser542 the chain carries Phosphoserine. HEAT repeat units lie at residues 588–628 (RTLM…VFSY), 734–771 (PNFAGILLRFLKGKLKDLGNVDFNTSNVLIRLFKLSFM), 779–821 (INEV…SIGG), 829–867 (RSIKPILQVLLQSLNQMILTARLPHERELYVELCITVPV), 870–910 (SVLA…NLTA), 919–958 (PVIDDVSKALFNLLQPQPFNHAISHNVVRILGKLGGRNRQ), 1074–1112 (NQENLFLRLLESVFYATSIKELKDDAMDLLNNLLDHFCL), 1188–1225 (SFIPELAKQFIHLCYDETYYNKRGGVLGIKVLIDNVKS), 1283–1320 (KVLENTLTDIVCELSNANPKVRNACQKSLHTISNLTGI), 1369–1408 (TFNEELFRLLQESIVLADAEDESLSTNIQKTTEYSTSEQL), 1435–1472 (NIRIRILAVFFKTMLKTSPEIINTTYEALKGSLAENSK), 1476–1512 (ELLQNGLKPLLMNLSDHQKLTVPGLDALSKLLELLIA), 1693–1734 (LKLK…RFTE), 1739–1776 (DQNPLLLDFIDFSFSNGIKASYSLKKFIFHNIIASSNK), 1918–1955 (FPIKVVTQVFVALLRSSHVEARYLVKQSLDVLTPVLHE), 2115–2155 (ELGL…LDSE), 2182–2219 (ENLPTIQNLLEKCIKSDHHDVQEALQKVLQVIMKAIKA), 2230–2267 (SPGKTFIQMLTSVITQDLQETSSVTAGVTLAWVLFMNF), 2269–2307 (DNIVPLLTPLMKTFSKLCKDHLSISQPKDAMALEEARIT), and 2536–2573 (IISSDFIDSLIEIFYQDPKAIHRAWVTLFPQVYKSIPK). The interval 2599–3744 (RTNVINMLLD…RTDVNFMPWF (1146 aa)) is head. An FAT domain is found at 2622–3177 (LVKYLAISYN…HFQLRTTKED (556 aa)). Residues 3374–3732 (FLPTVDFVRG…CIGSAVSPRN (359 aa)) form the PI3K/PI4K catalytic domain. Positions 3380-3386 (FVRGTHS) are G-loop. The segment at 3563 to 3571 (MINNRTPHK) is catalytic loop. An activation loop region spans residues 3600 to 3625 (LKNHDLSLPPDSPIFHNNEPVPFRLT). One can recognise an FATC domain in the interval 3712–3744 (TPTVTTQFILDCIGSAVSPRNLARTDVNFMPWF).

Belongs to the PI3/PI4-kinase family. TRA1 subfamily. Component of the 1.8 MDa SAGA (Spt-Ada-Gcn5 acetyltransferase) complex, which is composed of 19 subunits TRA1, SPT7, TAF5, NGG1/ADA3, SGF73, SPT20/ADA5, SPT8, TAF12, TAF6, HFI1/ADA1, UBP8, GCN5, ADA2, SPT3, SGF29, TAF10, TAF9, SGF11 and SUS1. The SAGA complex is composed of 4 modules, namely the HAT (histone acetyltransferase) module (GCN5, ADA2, NGG1/ADA3 and SGF29), the DUB (deubiquitinating) module (UBP8, SGF11, SGF73 and SUS1), the core or TAF (TBP-associated factor) module (TAF5, TAF6, TAF9, TAF10 and TAF12), and the Tra1 or SPT (Suppressor of Ty) module (TRA1, HFI1/ADA1, SPT3, SPT7, SPT8 and SPT20/ADA5). The Tra1/SPT module binds activators, the core module recruits TBP (TATA-binding protein), the HAT module contains the histone H3 acetyltransferase GCN5, and the DUB module comprises the histone H2B deubiquitinase UBP8. Also identified in an altered form of SAGA, named SALSA (SAGA altered, Spt8 absent) or SLIK (SAGA-like) complex, which contains a C-terminal truncated form of SPT7 and is missing SPT8. However, it has been shown that the SAGA and SAGA-like SALSA/SLIK transcriptional coactivators are structurally and biochemically equivalent. Component of the NuA4 acetyltransferase complex, which consists of the catalytic subunit ESA1 and the 12 non-catalytic subunits ACT1, ARP4, EAF1/VID21, SWC4/EAF2, EAF3, EAF5, EAF6, EAF7, EPL1, TRA1, YAF9 and YNG2. TRA1 is the scaffold subunit for binding to a variety of transcription activators or transcription factors to recruit NuA4 for targeted gene activation. Identified in the Ada.spt complex with NGG1/ADA3 and SPT7.

It is found in the nucleus. Its function is as follows. Essential scaffold subunit of the transcription coactivator SAGA complex. SAGA acts as a general cofactor required for essentially all RNA polymerase II transcription. At the promoters, SAGA is required for transcription pre-initiation complex (PIC) recruitment. It influences RNA polymerase II transcriptional activity through different activities such as TBP interaction (via core/TAF module) and promoter selectivity, interaction with transcription activators (via Tra1/SPT module), and chromatin modification through histone acetylation (via HAT module) and deubiquitination (via DUB module). SAGA preferentially acetylates histones H3 (to form H3K9ac, H3K14ac, H3K18ac and H3K23ac) and H2B and deubiquitinates histone H2B. SAGA interacts with DNA via upstream activating sequences (UASs). Also identified in a modified version of SAGA named SALSA or SLIK. The cleavage of SPT7 and the absence of the SPT8 subunit in SLIK neither drive any major conformational differences in its structure compared with SAGA, nor significantly affect HAT, DUB, or DNA-binding activities. Component of the NuA4 histone H4/H2A acetyltransferase involved in transcription and DNA repair. In Saccharomyces cerevisiae (strain ATCC 204508 / S288c) (Baker's yeast), this protein is SAGA complex/NuA4 acetyltransferase complex subunit TRA1.